A 737-amino-acid polypeptide reads, in one-letter code: Procollagen-lysine,2-oxoglutarate 5-dioxygenase 2 (737 aa).

The signal sequence occupies residues 1-25; it reads MGDRGARPGRLMPMLALLSWAAGLG. N-linked (GlcNAc...) asparagine glycans are attached at residues N63 and N209. At T320 the chain carries Phosphothreonine. Y323 bears the Phosphotyrosine mark. N-linked (GlcNAc...) asparagine glycosylation is found at N365 and N522. One can recognise a Fe2OG dioxygenase domain in the interval 644-737; the sequence is KGFALLNFVV…RYIAVSFIDP (94 aa). 2 residues coordinate Fe cation: H666 and D668. N696 is a glycosylation site (N-linked (GlcNAc...) asparagine). Position 704 is an N6-succinyllysine (K704). H718 is a Fe cation binding site. N-linked (GlcNAc...) asparagine glycosylation is present at N725. Residue R728 is part of the active site.

Homodimer. Requires Fe(2+) as cofactor. The cofactor is L-ascorbate. Is highly expressed in the heart, lung, kidney, eye, ovary and placenta.

The protein resides in the rough endoplasmic reticulum membrane. The enzyme catalyses L-lysyl-[collagen] + 2-oxoglutarate + O2 = (5R)-5-hydroxy-L-lysyl-[collagen] + succinate + CO2. Functionally, forms hydroxylysine residues in -Xaa-Lys-Gly- sequences in collagens. These hydroxylysines serve as sites of attachment for carbohydrate units and are essential for the stability of the intermolecular collagen cross-links. The sequence is that of Procollagen-lysine,2-oxoglutarate 5-dioxygenase 2 (Plod2) from Mus musculus (Mouse).